We begin with the raw amino-acid sequence, 233 residues long: Uracil-DNA glycosylase (233 aa).

Catalysis depends on Asp-70, which acts as the Proton acceptor.

It belongs to the uracil-DNA glycosylase (UDG) superfamily. UNG family.

It localises to the cytoplasm. It catalyses the reaction Hydrolyzes single-stranded DNA or mismatched double-stranded DNA and polynucleotides, releasing free uracil.. Functionally, excises uracil residues from the DNA which can arise as a result of misincorporation of dUMP residues by DNA polymerase or due to deamination of cytosine. The chain is Uracil-DNA glycosylase from Helicobacter pylori (strain G27).